The sequence spans 422 residues: Tyrosine--tRNA ligase (422 aa).

Tyrosine 34 lines the L-tyrosine pocket. The short motif at 39-48 (PTEDSLHVGH) is the 'HIGH' region element. Residues tyrosine 172 and glutamine 176 each contribute to the L-tyrosine site. The 'KMSKS' region motif lies at 232–236 (KFGKT). Lysine 235 contributes to the ATP binding site. An S4 RNA-binding domain is found at 354-412 (KDLQEALVLSSLAQSRTQAKNMIISNSISINTKKIVNKNYIIDDNDKLFNQFTLLSRGK).

Belongs to the class-I aminoacyl-tRNA synthetase family. TyrS type 1 subfamily. In terms of assembly, homodimer.

Its subcellular location is the cytoplasm. It catalyses the reaction tRNA(Tyr) + L-tyrosine + ATP = L-tyrosyl-tRNA(Tyr) + AMP + diphosphate + H(+). In terms of biological role, catalyzes the attachment of tyrosine to tRNA(Tyr) in a two-step reaction: tyrosine is first activated by ATP to form Tyr-AMP and then transferred to the acceptor end of tRNA(Tyr). In Buchnera aphidicola subsp. Schizaphis graminum (strain Sg), this protein is Tyrosine--tRNA ligase.